The chain runs to 220 residues: Ribose-5-phosphate isomerase A (220 aa).

Substrate is bound by residues 28 to 31 (TGST), 81 to 84 (DGAD), and 94 to 97 (KGGG). The active-site Proton acceptor is Glu103. A substrate-binding site is contributed by Lys121.

It belongs to the ribose 5-phosphate isomerase family. In terms of assembly, homodimer.

The catalysed reaction is aldehydo-D-ribose 5-phosphate = D-ribulose 5-phosphate. Its pathway is carbohydrate degradation; pentose phosphate pathway; D-ribose 5-phosphate from D-ribulose 5-phosphate (non-oxidative stage): step 1/1. Its function is as follows. Catalyzes the reversible conversion of ribose-5-phosphate to ribulose 5-phosphate. The polypeptide is Ribose-5-phosphate isomerase A (Aromatoleum aromaticum (strain DSM 19018 / LMG 30748 / EbN1) (Azoarcus sp. (strain EbN1))).